A 391-amino-acid chain; its full sequence is DNA-directed RNA polymerase I subunit RPA43 (391 aa).

2 disordered regions span residues 1–27 (MANW…SGGS) and 220–391 (QKQV…KKSK). Positions 288-299 (GRHKEKKKKKKR) are enriched in basic residues. Positions 289–353 (RHKEKKKKKK…RDKQQDSAEI (65 aa)) form a coiled coil. Polar residues predominate over residues 312–323 (MNNNSLQETALD). Over residues 336–345 (KEKKKKKKRD) the composition is skewed to basic residues.

This sequence belongs to the eukaryotic RPA43 RNA polymerase subunit family. As to quaternary structure, component of the RNA polymerase I (Pol I) complex consisting of at least 13 subunits.

Its subcellular location is the nucleus. The protein resides in the nucleolus. DNA-dependent RNA polymerase catalyzes the transcription of DNA into RNA using the four ribonucleoside triphosphates as substrates. Component of RNA polymerase I which synthesizes ribosomal RNA precursors. May be involved in recruitment of Pol I to rDNA promoters. The sequence is that of DNA-directed RNA polymerase I subunit RPA43 from Danio rerio (Zebrafish).